Here is a 313-residue protein sequence, read N- to C-terminus: 4-hydroxy-3-methylbut-2-enyl diphosphate reductase (313 aa).

Residue C14 coordinates [4Fe-4S] cluster. Residues H43 and H76 each coordinate (2E)-4-hydroxy-3-methylbut-2-enyl diphosphate. Dimethylallyl diphosphate is bound by residues H43 and H76. Isopentenyl diphosphate contacts are provided by H43 and H76. C98 serves as a coordination point for [4Fe-4S] cluster. Residue H126 coordinates (2E)-4-hydroxy-3-methylbut-2-enyl diphosphate. Residue H126 coordinates dimethylallyl diphosphate. Residue H126 participates in isopentenyl diphosphate binding. The Proton donor role is filled by E128. T166 contributes to the (2E)-4-hydroxy-3-methylbut-2-enyl diphosphate binding site. Residue C196 participates in [4Fe-4S] cluster binding. (2E)-4-hydroxy-3-methylbut-2-enyl diphosphate is bound by residues S224, S225, N226, and S269. S224, S225, N226, and S269 together coordinate dimethylallyl diphosphate. Isopentenyl diphosphate is bound by residues S224, S225, N226, and S269.

The protein belongs to the IspH family. The cofactor is [4Fe-4S] cluster.

It carries out the reaction isopentenyl diphosphate + 2 oxidized [2Fe-2S]-[ferredoxin] + H2O = (2E)-4-hydroxy-3-methylbut-2-enyl diphosphate + 2 reduced [2Fe-2S]-[ferredoxin] + 2 H(+). The catalysed reaction is dimethylallyl diphosphate + 2 oxidized [2Fe-2S]-[ferredoxin] + H2O = (2E)-4-hydroxy-3-methylbut-2-enyl diphosphate + 2 reduced [2Fe-2S]-[ferredoxin] + 2 H(+). It participates in isoprenoid biosynthesis; dimethylallyl diphosphate biosynthesis; dimethylallyl diphosphate from (2E)-4-hydroxy-3-methylbutenyl diphosphate: step 1/1. It functions in the pathway isoprenoid biosynthesis; isopentenyl diphosphate biosynthesis via DXP pathway; isopentenyl diphosphate from 1-deoxy-D-xylulose 5-phosphate: step 6/6. Functionally, catalyzes the conversion of 1-hydroxy-2-methyl-2-(E)-butenyl 4-diphosphate (HMBPP) into a mixture of isopentenyl diphosphate (IPP) and dimethylallyl diphosphate (DMAPP). Acts in the terminal step of the DOXP/MEP pathway for isoprenoid precursor biosynthesis. The polypeptide is 4-hydroxy-3-methylbut-2-enyl diphosphate reductase (Tropheryma whipplei (strain TW08/27) (Whipple's bacillus)).